A 351-amino-acid polypeptide reads, in one-letter code: Transcriptional activator POG1 (351 aa).

Basic and acidic residues predominate over residues 1 to 26 (MKQEPHRQSEEKEKPKGPMAVEREQH). Residues 1-56 (MKQEPHRQSEEKEKPKGPMAVEREQHTSLSSGTTVTASTGDESTNSRPVESSQTEK) form a disordered region. The segment covering 27-56 (TSLSSGTTVTASTGDESTNSRPVESSQTEK) has biased composition (polar residues). Residues Ser152 and Ser168 each carry the phosphoserine modification. Disordered regions lie at residues 234-256 (PGMG…TPVM) and 291-351 (QHQL…PPPT). Residues 241–256 (QLPTMSSNSESQTPVM) show a composition bias toward polar residues. Ser314 carries the post-translational modification Phosphoserine.

Belongs to the POG1 family. Phosphorylated by CDC28.

The protein localises to the nucleus. Functionally, transcriptional activator which promotes cell cycle recovery with CLN2, after pheromone induced G1 arrest, probably inhibiting the ability of STE20 to activate the pheromone response pathway. Binds the promoters of genes that function in cell cycle regulation, cytoskeletal organization, and spindle assembly. May also be involved in stress-resistance. This is Transcriptional activator POG1 (POG1) from Saccharomyces cerevisiae (strain ATCC 204508 / S288c) (Baker's yeast).